We begin with the raw amino-acid sequence, 348 residues long: Protein RecA (348 aa).

Gly65 to Thr72 is a binding site for ATP.

It belongs to the RecA family.

The protein resides in the cytoplasm. Its function is as follows. Can catalyze the hydrolysis of ATP in the presence of single-stranded DNA, the ATP-dependent uptake of single-stranded DNA by duplex DNA, and the ATP-dependent hybridization of homologous single-stranded DNAs. It interacts with LexA causing its activation and leading to its autocatalytic cleavage. The chain is Protein RecA from Enterococcus gallinarum.